A 203-amino-acid chain; its full sequence is Tail fiber assembly protein homolog (203 aa).

It belongs to the tfa family.

This chain is Tail fiber assembly protein homolog (T), found in Escherichia coli.